The following is a 377-amino-acid chain: 4-hydroxy-3-methylbut-2-en-1-yl diphosphate synthase (flavodoxin) (377 aa).

Cys-275, Cys-278, Cys-310, and Glu-317 together coordinate [4Fe-4S] cluster.

Belongs to the IspG family. The cofactor is [4Fe-4S] cluster.

It carries out the reaction (2E)-4-hydroxy-3-methylbut-2-enyl diphosphate + oxidized [flavodoxin] + H2O + 2 H(+) = 2-C-methyl-D-erythritol 2,4-cyclic diphosphate + reduced [flavodoxin]. Its pathway is isoprenoid biosynthesis; isopentenyl diphosphate biosynthesis via DXP pathway; isopentenyl diphosphate from 1-deoxy-D-xylulose 5-phosphate: step 5/6. Its function is as follows. Converts 2C-methyl-D-erythritol 2,4-cyclodiphosphate (ME-2,4cPP) into 1-hydroxy-2-methyl-2-(E)-butenyl 4-diphosphate. The sequence is that of 4-hydroxy-3-methylbut-2-en-1-yl diphosphate synthase (flavodoxin) from Ruegeria sp. (strain TM1040) (Silicibacter sp.).